A 314-amino-acid polypeptide reads, in one-letter code: Homoserine kinase (314 aa).

ATP is bound at residue 97–107 (PPARGMGSSAT).

It belongs to the GHMP kinase family. Homoserine kinase subfamily.

The protein resides in the cytoplasm. It catalyses the reaction L-homoserine + ATP = O-phospho-L-homoserine + ADP + H(+). It participates in amino-acid biosynthesis; L-threonine biosynthesis; L-threonine from L-aspartate: step 4/5. Catalyzes the ATP-dependent phosphorylation of L-homoserine to L-homoserine phosphate. The protein is Homoserine kinase of Synechococcus sp. (strain RCC307).